The primary structure comprises 705 residues: Dolichyl-diphosphooligosaccharide--protein glycosyltransferase subunit STT3A (705 aa).

At 1-17 (MTKFGFLRLSYEKQDTL) the chain is on the cytoplasmic side. The helical transmembrane segment at 18–38 (LKLLILSMAAVLSFSTRLFAV) threads the bilayer. Residues 39–119 (LRFESVIHEF…IDIRNVCVFL (81 aa)) lie on the Lumenal side of the membrane. Positions 47–49 (EFD) match the DXD motif 1 motif. Residue aspartate 49 coordinates Mn(2+). The chain crosses the membrane as a helical span at residues 120–138 (APLFSSFTTIVTYHLTKEL). Residues 139-140 (KD) are Cytoplasmic-facing. Residues 141–158 (AGAGLLAAAMIAVVPGYI) traverse the membrane as a helical segment. The Lumenal portion of the chain corresponds to 159-169 (SRSVAGSYDNE). Residues aspartate 167 and glutamate 169 each contribute to the Mn(2+) site. Residues 167 to 169 (DNE) carry the DXD motif 2 motif. A helical membrane pass occupies residues 170–189 (GIAIFCMLLTYYMWIKAVKT). Topologically, residues 190–191 (GS) are cytoplasmic. The helical transmembrane segment at 192 to 206 (ICWAAKCALAYFYMV) threads the bilayer. Topologically, residues 207-211 (SSWGG) are lumenal. Residues 212 to 228 (YVFLINLIPLHVLVLML) traverse the membrane as a helical segment. The Cytoplasmic segment spans residues 229–233 (TGRFS). Residues 234-259 (HRIYVAYCTVYCLGTILSMQISFVGF) traverse the membrane as a helical segment. At 260–267 (QPVLSSEH) the chain is on the lumenal side. A helical membrane pass occupies residues 268-287 (MAAFGVFGLCQIHAFVDYLR). Topologically, residues 288–300 (SKLNPQQFEVLFR) are cytoplasmic. Residues 301-321 (SVISLVGFVLLTVGALLMLTG) traverse the membrane as a helical segment. The Lumenal portion of the chain corresponds to 322 to 356 (KISPWTGRFYSLLDPSYAKNNIPIIASVSEHQPTT). Residues 348-351 (SVSE) carry the SVSE motif motif. A helical transmembrane segment spans residues 357-379 (WSSYYFDLQLLVFMFPVGLYYCF). At 380–385 (SNLSDA) the chain is on the cytoplasmic side. The chain crosses the membrane as a helical span at residues 386-402 (RIFIIMYGVTSMYFSAV). Over 403-406 (MVRL) the chain is Lumenal. Arginine 405 contacts dolichyl diphosphooligosaccharide. A helical transmembrane segment spans residues 407 to 428 (MLVLAPVMCILSGIGVSQVLST). The Cytoplasmic segment spans residues 429–453 (YMKNLDISRPDKKSKKQQDSTYPIK). The helical transmembrane segment at 454-473 (NEVASGMILVMAFFLITYTF) threads the bilayer. Residues 474–705 (HSTWVTSEAY…DLDNRGLSRT (232 aa)) are Lumenal-facing. Positions 525–527 (WWD) are interacts with target acceptor peptide in protein substrate. A WWDYG motif motif is present at residues 525-529 (WWDYG). Residue tyrosine 530 coordinates dolichyl diphosphooligosaccharide. N-linked (GlcNAc...) asparagine glycosylation is found at asparagine 537 and asparagine 544. An N-linked (GlcNAc...) (high mannose) asparagine glycan is attached at asparagine 548. Positions 592–599 (DINKFLWM) match the DK motif motif.

It belongs to the STT3 family. In terms of assembly, component of the oligosaccharyltransferase (OST) complex. There are 2 OST complexes, OST-A and OST-B, which contain STT3A or STT3B as catalytic subunit, respectively. OST-A and OST-B contain common core subunits RPN1, RPN2, OST48, OST4, DAD1 and TMEM258, and OST-A contains DC2/OSTC and KRTCAP2/KCP2 specific accessory subunits. OST-A complex assembly occurs through the formation of 3 subcomplexes. Subcomplex 1 contains RPN1 and TMEM258, subcomplex 2 contains the OST-A-specific subunits STT3A, DC2/OSTC, and KCP2 as well as the core subunit OST4, and subcomplex 3 contains RPN2, DAD1, and OST48. The OST-A complex can form stable complexes with the Sec61 complex or with both the Sec61 and TRAP complexes. The cofactor is Mg(2+). Mn(2+) serves as cofactor. In terms of tissue distribution, expressed at high levels in placenta, liver, muscle and pancreas, and at very low levels in brain, lung and kidney. Expressed in skin fibroblasts (at protein level).

It localises to the endoplasmic reticulum. It is found in the endoplasmic reticulum membrane. The catalysed reaction is a di-trans,poly-cis-dolichyl diphosphooligosaccharide + L-asparaginyl-[protein] = N(4)-(oligosaccharide-(1-&gt;4)-N-acetyl-beta-D-glucosaminyl-(1-&gt;4)-N-acetyl-beta-D-glucosaminyl)-L-asparaginyl-[protein] + a di-trans,poly-cis-dolichyl diphosphate + H(+). The protein operates within protein modification; protein glycosylation. STT3A, but not STT3B, is specifically inhibited by the N-glycosylation inhibitor NGI-235, which prevents productive binding pose of the glycan donor in the active site of STT3A. Functionally, catalytic subunit of the oligosaccharyl transferase (OST) complex that catalyzes the initial transfer of a defined glycan (Glc(3)Man(9)GlcNAc(2) in eukaryotes) from the lipid carrier dolichol-pyrophosphate to an asparagine residue within an Asn-X-Ser/Thr consensus motif in nascent polypeptide chains, the first step in protein N-glycosylation. N-glycosylation occurs cotranslationally and the complex associates with the Sec61 complex at the channel-forming translocon complex that mediates protein translocation across the endoplasmic reticulum (ER). All subunits are required for a maximal enzyme activity. This subunit contains the active site and the acceptor peptide and donor lipid-linked oligosaccharide (LLO) binding pockets. STT3A is present in the majority of OST complexes and mediates cotranslational N-glycosylation of most sites on target proteins, while STT3B-containing complexes are required for efficient post-translational glycosylation and mediate glycosylation of sites that have been skipped by STT3A. STT3A-containing OST-A complex is also required to prevent hyperglycosylation of some target proteins by preventing glycosylation of facultative sites before folding of target proteins is completed. The sequence is that of Dolichyl-diphosphooligosaccharide--protein glycosyltransferase subunit STT3A from Homo sapiens (Human).